Consider the following 552-residue polypeptide: Ribosomal lysine N-methyltransferase 3 (552 aa).

The region spanning 26 to 335 (SKCDIRESPL…QGQEIFNSYG (310 aa)) is the SET domain. Residue tyrosine 334 participates in S-adenosyl-L-methionine binding. Residues 399 to 432 (EDEEDEDGQAKSDNLSDDIESEEEEEEEEGDDSL) are disordered. The span at 413 to 432 (LSDDIESEEEEEEEEGDDSL) shows a compositional bias: acidic residues.

It belongs to the class V-like SAM-binding methyltransferase superfamily.

It is found in the nucleus. Its function is as follows. S-adenosyl-L-methionine-dependent protein-lysine N-methyltransferase that monomethylates 60S ribosomal protein L42 (RPL42A and RPL42B) at 'Lys-40'. This Saccharomyces cerevisiae (strain ATCC 204508 / S288c) (Baker's yeast) protein is Ribosomal lysine N-methyltransferase 3.